The primary structure comprises 456 residues: Cyclic AMP-responsive element-binding protein 3-like protein 3 (456 aa).

Disordered regions lie at residues 1-20 and 47-120; these read MDGDLAIGKMASSTSPMGPI and GHGE…KGPC. At 1-317 the chain is on the cytoplasmic side; sequence MDGDLAIGKM…STSKSAQTGT (317 aa). Over residues 71–85 the composition is skewed to polar residues; that stretch reads DSDSPTWSPAASDSG. The 64-residue stretch at 238–301 folds into the bZIP domain; that stretch reads MLKKIRRKIR…LSLLEQLKKL (64 aa). The interval 240–269 is basic motif; the sequence is KKIRRKIRNKQSAQESRKKKKEYIDGLETR. Residues 280–301 are leucine-zipper; the sequence is LQRKVLHLEKQNLSLLEQLKKL. A Glycyl lysine isopeptide (Lys-Gly) (interchain with G-Cter in ubiquitin) cross-link involves residue K289. The chain crosses the membrane as a helical; Signal-anchor for type II membrane protein span at residues 318 to 338; that stretch reads CIAVLLFSFALIVLPSISPFA. Over 339 to 456 the chain is Lumenal; that stretch reads SNRAESPGDF…VGLEAAGGEL (118 aa). 2 disordered regions span residues 365 to 423 and 435 to 456; these read RVAP…QGNS and CAPPEPAVSPGHVGLEAAGGEL. 2 N-linked (GlcNAc...) asparagine glycosylation sites follow: N408 and N415.

The protein belongs to the bZIP family. ATF subfamily. Binds DNA as a dimer. May form homodimers. Interacts with ATF6. Interacts with SYNV1/HRD1; this interaction leads to CREB3L3 ubiquitination and proteasomal degradation. In terms of processing, controlled by regulated intramembrane proteolysis (RIP). Following ER stress a fragment containing the cytoplasmic transcription factor domain is released by proteolysis. The cleavage seems to be performed sequentially by site-1 and site-2 proteases (PS1 and PS2). N-glycosylation is required for optimal proteolytic activation. Post-translationally, ubiquitinated at Lys-289 by SYNV1/HRD1 via 'Lys-27'-linked ubiquitin.

It localises to the endoplasmic reticulum membrane. Its subcellular location is the nucleus. In terms of biological role, transcription factor that may act during endoplasmic reticulum stress by activating unfolded protein response target genes. Activated in response to cAMP stimulation. In vitro, binds the cAMP response element (CRE). Activates transcription through box-B element and CRE. Seems to function synergistically with ATF6. In acute inflammatory response, may activate expression of acute phase response (APR) genes. May be involved in growth suppression. Regulates FGF21 transcription. Plays a crucial role in the regulation of triglyceride metabolism and is required for the maintenance of normal plasma triglyceride concentrations. The polypeptide is Cyclic AMP-responsive element-binding protein 3-like protein 3 (CREB3L3) (Bos taurus (Bovine)).